Here is a 383-residue protein sequence, read N- to C-terminus: 8-amino-7-oxononanoate synthase (383 aa).

R21 serves as a coordination point for substrate. Residue 108-109 (GY) participates in pyridoxal 5'-phosphate binding. H133 contacts substrate. Residues S179, H207, and T233 each contribute to the pyridoxal 5'-phosphate site. N6-(pyridoxal phosphate)lysine is present on K236. T350 serves as a coordination point for substrate.

Belongs to the class-II pyridoxal-phosphate-dependent aminotransferase family. BioF subfamily. In terms of assembly, homodimer. Pyridoxal 5'-phosphate serves as cofactor.

It catalyses the reaction 6-carboxyhexanoyl-[ACP] + L-alanine + H(+) = (8S)-8-amino-7-oxononanoate + holo-[ACP] + CO2. It participates in cofactor biosynthesis; biotin biosynthesis. Catalyzes the decarboxylative condensation of pimeloyl-[acyl-carrier protein] and L-alanine to produce 8-amino-7-oxononanoate (AON), [acyl-carrier protein], and carbon dioxide. The polypeptide is 8-amino-7-oxononanoate synthase (Photorhabdus laumondii subsp. laumondii (strain DSM 15139 / CIP 105565 / TT01) (Photorhabdus luminescens subsp. laumondii)).